The following is a 387-amino-acid chain: Methylthioribose-1-phosphate isomerase (387 aa).

The active-site Proton donor is D257.

This sequence belongs to the eIF-2B alpha/beta/delta subunits family. MtnA subfamily.

The protein localises to the cytoplasm. Its subcellular location is the nucleus. The enzyme catalyses 5-(methylsulfanyl)-alpha-D-ribose 1-phosphate = 5-(methylsulfanyl)-D-ribulose 1-phosphate. It functions in the pathway amino-acid biosynthesis; L-methionine biosynthesis via salvage pathway; L-methionine from S-methyl-5-thio-alpha-D-ribose 1-phosphate: step 1/6. In terms of biological role, catalyzes the interconversion of methylthioribose-1-phosphate (MTR-1-P) into methylthioribulose-1-phosphate (MTRu-1-P). This Aspergillus fumigatus (strain CBS 144.89 / FGSC A1163 / CEA10) (Neosartorya fumigata) protein is Methylthioribose-1-phosphate isomerase (mri1).